Consider the following 510-residue polypeptide: NAD(P)H-quinone oxidoreductase subunit 2 A, chloroplastic (510 aa).

12 consecutive transmembrane segments (helical) span residues 24 to 44 (LLLF…GLIL), 59 to 79 (WFYF…LFRW), 99 to 119 (IFQF…VEYI), 124 to 144 (MAIT…MFLC), 149 to 169 (LITI…LSGY), 183 to 203 (YLLM…WLYG), 229 to 249 (ISLA…PAPF), 295 to 315 (WHLL…LLAI), 323 to 343 (MLAY…IVGD), 354 to 374 (YMLF…LFGL), 395 to 415 (ALSL…AGFF), and 418 to 438 (LYLF…IGLL).

Belongs to the complex I subunit 2 family. As to quaternary structure, NDH is composed of at least 16 different subunits, 5 of which are encoded in the nucleus.

The protein resides in the plastid. It is found in the chloroplast thylakoid membrane. The catalysed reaction is a plastoquinone + NADH + (n+1) H(+)(in) = a plastoquinol + NAD(+) + n H(+)(out). It catalyses the reaction a plastoquinone + NADPH + (n+1) H(+)(in) = a plastoquinol + NADP(+) + n H(+)(out). NDH shuttles electrons from NAD(P)H:plastoquinone, via FMN and iron-sulfur (Fe-S) centers, to quinones in the photosynthetic chain and possibly in a chloroplast respiratory chain. The immediate electron acceptor for the enzyme in this species is believed to be plastoquinone. Couples the redox reaction to proton translocation, and thus conserves the redox energy in a proton gradient. This Triticum aestivum (Wheat) protein is NAD(P)H-quinone oxidoreductase subunit 2 A, chloroplastic.